A 291-amino-acid chain; its full sequence is ATP synthase gamma chain (291 aa).

Belongs to the ATPase gamma chain family. F-type ATPases have 2 components, CF(1) - the catalytic core - and CF(0) - the membrane proton channel. CF(1) has five subunits: alpha(3), beta(3), gamma(1), delta(1), epsilon(1). CF(0) has three main subunits: a, b and c.

Its subcellular location is the cell inner membrane. Produces ATP from ADP in the presence of a proton gradient across the membrane. The gamma chain is believed to be important in regulating ATPase activity and the flow of protons through the CF(0) complex. In Methylobacillus flagellatus (strain ATCC 51484 / DSM 6875 / VKM B-1610 / KT), this protein is ATP synthase gamma chain.